The sequence spans 153 residues: UPF0743 protein YCR087C-A (153 aa).

C2HC LYAR-type zinc fingers lie at residues 1–26 (MVTF…YRCP) and 27–52 (NAYY…TSCI). Zn(2+)-binding residues include cysteine 6, cysteine 9, histidine 21, cysteine 25, cysteine 32, cysteine 35, histidine 48, and cysteine 51. Residues 63–96 (YKGNKKQKQKQQQKQQQKQHQHQPVATPAKKVEK) are disordered. Residues 65–83 (GNKKQKQKQQQKQQQKQHQ) are compositionally biased toward basic residues.

It belongs to the UPF0743 family.

Its subcellular location is the nucleus. The protein localises to the nucleolus. The protein is UPF0743 protein YCR087C-A of Saccharomyces cerevisiae (strain ATCC 204508 / S288c) (Baker's yeast).